The sequence spans 600 residues: Proline--tRNA ligase (600 aa).

It belongs to the class-II aminoacyl-tRNA synthetase family. ProS type 1 subfamily. In terms of assembly, homodimer.

The protein localises to the cytoplasm. It carries out the reaction tRNA(Pro) + L-proline + ATP = L-prolyl-tRNA(Pro) + AMP + diphosphate. Catalyzes the attachment of proline to tRNA(Pro) in a two-step reaction: proline is first activated by ATP to form Pro-AMP and then transferred to the acceptor end of tRNA(Pro). As ProRS can inadvertently accommodate and process non-cognate amino acids such as alanine and cysteine, to avoid such errors it has two additional distinct editing activities against alanine. One activity is designated as 'pretransfer' editing and involves the tRNA(Pro)-independent hydrolysis of activated Ala-AMP. The other activity is designated 'posttransfer' editing and involves deacylation of mischarged Ala-tRNA(Pro). The misacylated Cys-tRNA(Pro) is not edited by ProRS. This Prochlorococcus marinus (strain AS9601) protein is Proline--tRNA ligase.